The primary structure comprises 949 residues: RNA polymerase-associated protein RapA (949 aa).

In terms of domain architecture, Helicase ATP-binding spans 164-332 (EVADRIAPRV…FARLRLLDPN (169 aa)). ATP is bound at residue 177–184 (DEVGLGKT). Residues 278–281 (DEAH) carry the DEAH box motif. The Helicase C-terminal domain occupies 474 to 628 (RVEWLIDQLK…TCPTGNALQH (155 aa)).

This sequence belongs to the SNF2/RAD54 helicase family. RapA subfamily. Interacts with the RNAP. Has a higher affinity for the core RNAP than for the holoenzyme. Its ATPase activity is stimulated by binding to RNAP.

Its function is as follows. Transcription regulator that activates transcription by stimulating RNA polymerase (RNAP) recycling in case of stress conditions such as supercoiled DNA or high salt concentrations. Probably acts by releasing the RNAP, when it is trapped or immobilized on tightly supercoiled DNA. Does not activate transcription on linear DNA. Probably not involved in DNA repair. In Pseudomonas fluorescens (strain ATCC BAA-477 / NRRL B-23932 / Pf-5), this protein is RNA polymerase-associated protein RapA.